The following is a 626-amino-acid chain: Phosphomethylpyrimidine synthase (626 aa).

The disordered stretch occupies residues 1–22 (MTKQEKAINLSESAQVDQQSVQ). Residues 10–22 (LSESAQVDQQSVQ) show a composition bias toward polar residues. Residues Asn232, Met261, Tyr290, His326, 346 to 348 (SRG), 387 to 390 (DGLR), and Glu426 each bind substrate. His430 contributes to the Zn(2+) binding site. Tyr453 lines the substrate pocket. His494 is a binding site for Zn(2+). [4Fe-4S] cluster contacts are provided by Cys574, Cys577, and Cys582.

This sequence belongs to the ThiC family. Homodimer. [4Fe-4S] cluster serves as cofactor.

It catalyses the reaction 5-amino-1-(5-phospho-beta-D-ribosyl)imidazole + S-adenosyl-L-methionine = 4-amino-2-methyl-5-(phosphooxymethyl)pyrimidine + CO + 5'-deoxyadenosine + formate + L-methionine + 3 H(+). It participates in cofactor biosynthesis; thiamine diphosphate biosynthesis. Catalyzes the synthesis of the hydroxymethylpyrimidine phosphate (HMP-P) moiety of thiamine from aminoimidazole ribotide (AIR) in a radical S-adenosyl-L-methionine (SAM)-dependent reaction. This Pseudomonas putida (strain GB-1) protein is Phosphomethylpyrimidine synthase.